Consider the following 547-residue polypeptide: CTP synthase (547 aa).

Positions 1–265 are amidoligase domain; the sequence is MARFIFITGG…DQAVLDAFGI (265 aa). S13 provides a ligand contact to CTP. A UTP-binding site is contributed by S13. Residues 14-19 and D71 each bind ATP; that span reads SLGKGL. D71 and E139 together coordinate Mg(2+). Residues 146-148, 186-191, and K222 each bind CTP; these read DIE and KTKPTQ. UTP contacts are provided by residues 186 to 191 and K222; that span reads KTKPTQ. A Glutamine amidotransferase type-1 domain is found at 291–546; sequence KVAIVGKYTQ…VRAAKENSRL (256 aa). G353 lines the L-glutamine pocket. C380 functions as the Nucleophile; for glutamine hydrolysis in the catalytic mechanism. L-glutamine is bound by residues 381–384, E404, and R474; that span reads LGMQ. Active-site residues include H519 and E521.

The protein belongs to the CTP synthase family. Homotetramer.

It catalyses the reaction UTP + L-glutamine + ATP + H2O = CTP + L-glutamate + ADP + phosphate + 2 H(+). It carries out the reaction L-glutamine + H2O = L-glutamate + NH4(+). The catalysed reaction is UTP + NH4(+) + ATP = CTP + ADP + phosphate + 2 H(+). The protein operates within pyrimidine metabolism; CTP biosynthesis via de novo pathway; CTP from UDP: step 2/2. Its activity is regulated as follows. Allosterically activated by GTP, when glutamine is the substrate; GTP has no effect on the reaction when ammonia is the substrate. The allosteric effector GTP functions by stabilizing the protein conformation that binds the tetrahedral intermediate(s) formed during glutamine hydrolysis. Inhibited by the product CTP, via allosteric rather than competitive inhibition. In terms of biological role, catalyzes the ATP-dependent amination of UTP to CTP with either L-glutamine or ammonia as the source of nitrogen. Regulates intracellular CTP levels through interactions with the four ribonucleotide triphosphates. This chain is CTP synthase, found in Jannaschia sp. (strain CCS1).